A 387-amino-acid chain; its full sequence is Alpha-sarcoglycan (387 aa).

The signal sequence occupies residues 1–23; the sequence is MAETLFWTPLLVVLLAGLGDTEA. Topologically, residues 24-290 are extracellular; that stretch reads QQTTLHPLVG…APDRDFLVDA (267 aa). N-linked (GlcNAc...) asparagine glycosylation is found at N174 and N246. Residues 291 to 311 form a helical membrane-spanning segment; the sequence is LVTLLVPLLVALLLTLLLAYV. Topologically, residues 312 to 387 are cytoplasmic; that stretch reads MCCRREGRLK…AQVPLILDQH (76 aa). S377 is modified (phosphoserine).

It belongs to the sarcoglycan alpha/epsilon family. Interacts with the syntrophin SNTA1. Cross-link to form 2 major subcomplexes: one consisting of SGCB, SGCD and SGCG and the other consisting of SGCB and SGCD. The association between SGCB and SGCG is particularly strong while SGCA is loosely associated with the other sarcoglycans. As to expression, most strongly expressed in skeletal muscle. Also expressed in cardiac muscle and, at much lower levels, in lung. In the fetus, most abundant in cardiac muscle and, at lower levels, in lung. Also detected in liver and kidney. Not expressed in brain.

It is found in the cell membrane. Its subcellular location is the sarcolemma. It localises to the cytoplasm. The protein localises to the cytoskeleton. Component of the sarcoglycan complex, a subcomplex of the dystrophin-glycoprotein complex which forms a link between the F-actin cytoskeleton and the extracellular matrix. In Homo sapiens (Human), this protein is Alpha-sarcoglycan (SGCA).